Here is a 122-residue protein sequence, read N- to C-terminus: Proteasome assembly chaperone 3 (122 aa).

M1 is modified (N-acetylmethionine).

It belongs to the PSMG3 family. In terms of assembly, homodimer. Interacts with PSMG4. Interacts directly with alpha and beta subunits of the 20S proteasome but dissociates before the formation of half-proteasomes, probably upon recruitment of POMP.

Chaperone protein which promotes assembly of the 20S proteasome. May cooperate with PSMG1-PSMG2 heterodimers to orchestrate the correct assembly of proteasomes. The polypeptide is Proteasome assembly chaperone 3 (Homo sapiens (Human)).